The primary structure comprises 524 residues: Probable glutamyl-tRNA reductase 3, chloroplastic (524 aa).

Residues 1-52 (MAVSNASVVLSPNLETSSSWYHHNPSSSLDLIRIHTLPMNKMTRRGLIQRVR) constitute a chloroplast transit peptide. Residues 129–132 (TCNR), serine 189, 194–196 (ENQ), and glutamine 200 each bind substrate. The active-site Nucleophile is the cysteine 130. 269 to 274 (GAGEMG) contributes to the NADP(+) binding site.

The protein belongs to the glutamyl-tRNA reductase family.

Its subcellular location is the plastid. It localises to the chloroplast. The catalysed reaction is (S)-4-amino-5-oxopentanoate + tRNA(Glu) + NADP(+) = L-glutamyl-tRNA(Glu) + NADPH + H(+). It participates in porphyrin-containing compound metabolism; protoporphyrin-IX biosynthesis; 5-aminolevulinate from L-glutamyl-tRNA(Glu): step 1/2. It functions in the pathway porphyrin-containing compound metabolism; chlorophyll biosynthesis. Its function is as follows. Catalyzes the NADPH-dependent reduction of glutamyl-tRNA(Glu) to glutamate 1-semialdehyde (GSA). The chain is Probable glutamyl-tRNA reductase 3, chloroplastic (HEMA3) from Arabidopsis thaliana (Mouse-ear cress).